A 103-amino-acid chain; its full sequence is ATP-dependent Clp protease adapter protein ClpS 2 (103 aa).

The protein belongs to the ClpS family. Binds to the N-terminal domain of the chaperone ClpA.

Involved in the modulation of the specificity of the ClpAP-mediated ATP-dependent protein degradation. The polypeptide is ATP-dependent Clp protease adapter protein ClpS 2 (Agrobacterium fabrum (strain C58 / ATCC 33970) (Agrobacterium tumefaciens (strain C58))).